The following is a 318-amino-acid chain: NADH-ubiquinone oxidoreductase chain 1 (318 aa).

8 helical membrane-spanning segments follow: residues 3–23 (FVNLLTTIIPILLAVAFLTLL), 68–88 (LILFIIAPTLALTLALMMWIP), 102–122 (ILFMLALSSLAVYAILWSGWA), 146–166 (LAIIILSVLLMNGSFTLSTLI), 171–191 (HIWLLLPSWPLAMMWFISTLA), 222–242 (LFFLAEYANIIMMNALTTILF), 253–273 (EMYTTNFMLKTLLFTTFFLWI), and 294–314 (LPLTLVMCMWHITLPIILASI).

Belongs to the complex I subunit 1 family.

Its subcellular location is the mitochondrion inner membrane. The catalysed reaction is a ubiquinone + NADH + 5 H(+)(in) = a ubiquinol + NAD(+) + 4 H(+)(out). Core subunit of the mitochondrial membrane respiratory chain NADH dehydrogenase (Complex I) that is believed to belong to the minimal assembly required for catalysis. Complex I functions in the transfer of electrons from NADH to the respiratory chain. The immediate electron acceptor for the enzyme is believed to be ubiquinone. The sequence is that of NADH-ubiquinone oxidoreductase chain 1 (MT-ND1) from Nyctalus plancyi velutinus (Fine-haired noctule).